Here is a 454-residue protein sequence, read N- to C-terminus: Probable DNA primase large subunit (454 aa).

[4Fe-4S] cluster is bound by residues Cys-280, Cys-359, Cys-375, and Cys-415.

Belongs to the eukaryotic-type primase large subunit family. As to quaternary structure, heterodimer of a small subunit and a large subunit. [4Fe-4S] cluster is required as a cofactor.

Its function is as follows. DNA primase is the polymerase that synthesizes small RNA primers for the Okazaki fragments made during discontinuous DNA replication. This is Probable DNA primase large subunit from Arabidopsis thaliana (Mouse-ear cress).